We begin with the raw amino-acid sequence, 508 residues long: MAQVINTNSLSLLTQNNLNKSQSSLSSAIERLSSGLRINSAKDDAAGQAIANRFTSNIKGLTQASRNANDGISIAQTTEGALNEINNNLQRVRELSVQATNGTNSDSDLKSIQDEIQQRLEEIDRVSNQTQFNGVKVLSQDNQMKIQVGANDGETITIDLQKIDVKSLGLDGFNVNGPKEATVGDLKSSFKNVTGYDTYAVGANKYRVDVNSGAVVTDTTAPTVPDKVYVNAANGQLTTDDAENNTAVDLFKTTKSTAGTAEAKAIAGAIKGGKEGDTFDYKGVTFTIDTKTGNDGNGKVSTTINGEKVTLTVADITAGAANVDAATLQSSKNVYTSVVNGQFTFDDKTKNESAKLSDLEANNAVKGESKITVNGAEYTANAAGDKVTLAGKTMFIDKTASGVSTLINEDAAAAKKSTANPLASIDSALSKVDAVRSSLGAIQNRFDSAITNLGNTVTNLNSARSRIEDADYATEVSNMSKAQILQQAGTSVLAQANQVPQNVLSLLR.

This sequence belongs to the bacterial flagellin family.

It is found in the secreted. It localises to the bacterial flagellum. Flagellin is the subunit protein which polymerizes to form the filaments of bacterial flagella. The chain is Flagellin (fliC) from Salmonella berta.